Reading from the N-terminus, the 322-residue chain is Protein-L-isoaspartate O-methyltransferase (322 aa).

A disordered region spans residues 1-101 (MSGERAKRFP…AKQGDRSAAP (101 aa)). Over residues 14-29 (EDLKREPRKPEGRVAE) the composition is skewed to basic and acidic residues. 2 stretches are compositionally biased toward low complexity: residues 33-51 (AGDA…PAAA) and 67-91 (AANP…PQGG). Residue Ser-170 is part of the active site.

Belongs to the methyltransferase superfamily. L-isoaspartyl/D-aspartyl protein methyltransferase family.

The protein localises to the cytoplasm. It catalyses the reaction [protein]-L-isoaspartate + S-adenosyl-L-methionine = [protein]-L-isoaspartate alpha-methyl ester + S-adenosyl-L-homocysteine. Its function is as follows. Catalyzes the methyl esterification of L-isoaspartyl residues in peptides and proteins that result from spontaneous decomposition of normal L-aspartyl and L-asparaginyl residues. It plays a role in the repair and/or degradation of damaged proteins. This is Protein-L-isoaspartate O-methyltransferase from Burkholderia pseudomallei (strain 668).